A 348-amino-acid polypeptide reads, in one-letter code: Glucan endo-1,3-beta-glucosidase, basic isoform (348 aa).

A Pyrrolidone carboxylic acid modification is found at Gln-1. The Proton donor role is filled by Glu-95. The active-site Nucleophile is the Glu-240. Positions 317 to 348 (AQRMQRLLLMSSMQHIPLRVTCKLEPSSQSLL) are cleaved as a propeptide — removed in mature form.

It belongs to the glycosyl hydrolase 17 family.

It localises to the vacuole. It carries out the reaction Hydrolysis of (1-&gt;3)-beta-D-glucosidic linkages in (1-&gt;3)-beta-D-glucans.. In terms of biological role, implicated in the defense of plants against pathogens. In Phaseolus vulgaris (Kidney bean), this protein is Glucan endo-1,3-beta-glucosidase, basic isoform.